The chain runs to 31 residues: Palustrin-2a (31 aa).

C23 and C29 are oxidised to a cystine.

In terms of tissue distribution, expressed by the skin glands.

It localises to the secreted. Antimicrobial activity against Gram-negative bacterium E.coli. This Lithobates palustris (Pickerel frog) protein is Palustrin-2a.